A 63-amino-acid chain; its full sequence is Small ribosomal subunit protein bS21 (63 aa).

This sequence belongs to the bacterial ribosomal protein bS21 family.

The chain is Small ribosomal subunit protein bS21 from Parabacteroides distasonis (strain ATCC 8503 / DSM 20701 / CIP 104284 / JCM 5825 / NCTC 11152).